Reading from the N-terminus, the 423-residue chain is MSIKLQPVKGSKDLLPEEFGKHDYIISVSRNLSKLYGFQPISTPIIEYTEIFNRTLGKDSDVLSKEMYVFLDKGNRSVSLRPEFTASIMRAVIYNNLQNKKLPLKYFSSGPAFRYDNPQAGRQRQFHQINLECIGDGSPFSDAEIVLLAYDILKKLNLVDKVNLEINSLGCMESRAKYQQALVEYFSKYRTELSQDSQSRLIENPLRILDSKNLHDKKISASAPSIHDYYTIEARGYFDKVLEYLEFCGIKYTINANLVRGLDYYCHTVFEYVSTQIGAQSTVLGGGRYDGLFEQMGGKLASGKKMLPAIGFAAGIERLALLTNYTPVDVRPIVIIPVDEEYHQHGIILLQKLRNNNITTVIDLQDSISKRLNRANHIKASKVIFIGAIEMREQSYRIKDLDTSNECVIIHNELLSYLQNNCS.

It belongs to the class-II aminoacyl-tRNA synthetase family. Homodimer.

The protein localises to the cytoplasm. The catalysed reaction is tRNA(His) + L-histidine + ATP = L-histidyl-tRNA(His) + AMP + diphosphate + H(+). This chain is Histidine--tRNA ligase, found in Orientia tsutsugamushi (strain Boryong) (Rickettsia tsutsugamushi).